Reading from the N-terminus, the 385-residue chain is MNPVPAQREYFLDSIRAWLMLLGIPFHISLIYSSHTWHVNSAEPSLWLTLFNDFIHSFRMQVFFVISGYFSYMLFLRYPLKKWWKVRVERVGIPMLTAIPLLTLPQFIMLQYVKGKAESWPRLSLYDKYNTLAWELISHLWFLLVLVVMTTLCVWIFKRIRNNLENSDKTNKKFSMVKLSVIFLCLGIGYAVIRRTIFIVYPPILSNGMFNFIVMQTLFYLPFFILGALAFIFPHLKALFTTPSRGCTLAAALAFVAYLLNQRYGSGDAWMYETESVITMVLGLWMVNVVFSFGHRLLNFQSARVTYFVNASLFIYLVHHPLTLFFGAYITPHITSNWLGFLCGLIFVVGIAIILYEIHLRIPLLKFLFSGKPVVKRENDKAPAR.

A run of 10 helical transmembrane segments spans residues 17-37, 60-80, 91-111, 137-157, 173-193, 212-232, 239-259, 274-294, 311-331, and 338-358; these read AWLMLLGIPFHISLIYSSHTW, MQVFFVISGYFSYMLFLRYPL, VGIPMLTAIPLLTLPQFIMLQ, ISHLWFLLVLVVMTTLCVWIF, KFSMVKLSVIFLCLGIGYAVI, FIVMQTLFYLPFFILGALAFI, LFTTPSRGCTLAAALAFVAYL, TESVITMVLGLWMVNVVFSFG, ASLFIYLVHHPLTLFFGAYIT, and WLGFLCGLIFVVGIAIILYEI.

It belongs to the acyltransferase 3 family. OpgC subfamily.

It localises to the cell membrane. Its pathway is glycan metabolism; osmoregulated periplasmic glucan (OPG) biosynthesis. In terms of biological role, necessary for the succinyl substitution of periplasmic glucans. Could catalyze the transfer of succinyl residues from the cytoplasmic side of the membrane to the nascent glucan backbones on the periplasmic side of the membrane. In Escherichia coli O6:K15:H31 (strain 536 / UPEC), this protein is Glucans biosynthesis protein C.